We begin with the raw amino-acid sequence, 811 residues long: Myb-like DNA-binding protein BAS1 (811 aa).

The 77-residue stretch at 34-110 (HRKNGRNSWS…DVRKRWTGSL (77 aa)) folds into the Myb-like domain. HTH myb-type domains follow at residues 111–165 (DPNL…GPGS) and 166–218 (KGRL…TMVV). DNA-binding regions (H-T-H motif) lie at residues 138–161 (WLSI…IEVL) and 191–214 (WRKI…RKII). Positions 237–264 (DMTDGKLRQHPIADSDIRSDSTPNKEEQ) are enriched in basic and acidic residues. Disordered stretches follow at residues 237–320 (DMTD…SAPP), 348–379 (SQMN…DEHM), 535–713 (ATSH…LRDE), and 782–811 (LHNE…LNPS). Low complexity predominate over residues 265 to 275 (LQLSQQNNPSL). Basic and acidic residues predominate over residues 282–298 (NVKENESSKLPRLKDND). 3 stretches are compositionally biased toward polar residues: residues 348–366 (SQMN…QTSL), 535–613 (ATSH…TSGS), and 653–664 (LNPSPNSVRSNG). Over residues 782 to 794 (LHNEAKKTSEHDM) the composition is skewed to basic and acidic residues.

Monomer.

Its subcellular location is the nucleus. Functionally, activates HIS4 transcription only in combination with PHO2/BAS2. BAS1 is also involved in the regulation of the purine biosynthesis pathway. The sequence is that of Myb-like DNA-binding protein BAS1 (BAS1) from Saccharomyces cerevisiae (strain ATCC 204508 / S288c) (Baker's yeast).